The chain runs to 392 residues: Sulfate adenylyltransferase (392 aa).

The protein belongs to the sulfate adenylyltransferase family.

The enzyme catalyses sulfate + ATP + H(+) = adenosine 5'-phosphosulfate + diphosphate. It participates in sulfur metabolism; hydrogen sulfide biosynthesis; sulfite from sulfate: step 1/3. This is Sulfate adenylyltransferase from Nostoc punctiforme (strain ATCC 29133 / PCC 73102).